The sequence spans 105 residues: Integration host factor (105 aa).

Positions 64–71 (LPKVGKVK) match the H2TH motif, binds DNA motif. Residues 82–94 (APTRRLRGLGDRQ) form a lid, binds DNA region.

The protein belongs to the actinobacterial IHF (aIHF) family. Binds DNA as a monomer. As to quaternary structure, (Microbial infection) Forms a complex with L5 Int and attP DNA. The complex binds attB to form products.

The protein localises to the cytoplasm. The protein resides in the nucleoid. A nucleoid-associated protein (NAP) that binds DNA without any sequence specificity. Compacts DNA. Binds along the whole chromosome in a dynamic manner, has equal affinity for the oriC site, attB and a randon 62% GC-rich sequence. Plays a role in transcription regulation. Functionally, (Microbial infection) Stimulates temperate Mycobacterium phage L5 Int-mediated recombination in vitro using supercoiled attP (phage attachment site) DNA, linear attB DNA (bacterial attachment site) and L5 integrase (L5 Int or Int-L5, AC P22884). mIHF acts on L5 Int to stimulate formation of a specific intasome complex. mIHF probably stabilizes a sharp bend in the DNA during phage integration. This is Integration host factor from Mycolicibacterium smegmatis (strain ATCC 700084 / mc(2)155) (Mycobacterium smegmatis).